The following is a 144-amino-acid chain: Prefoldin subunit alpha (144 aa).

It belongs to the prefoldin alpha subunit family. Heterohexamer of two alpha and four beta subunits.

The protein resides in the cytoplasm. Its function is as follows. Molecular chaperone capable of stabilizing a range of proteins. Seems to fulfill an ATP-independent, HSP70-like function in archaeal de novo protein folding. This Methanococcus aeolicus (strain ATCC BAA-1280 / DSM 17508 / OCM 812 / Nankai-3) protein is Prefoldin subunit alpha.